The primary structure comprises 361 residues: Putative pumilio homolog 22 (361 aa).

Residues 5–348 (RGYDLASQVL…NIVAIIDSET (344 aa)) form the PUM-HD domain. 2 Pumilio repeats span residues 27-63 (HITY…EFLD) and 64-103 (LIAQ…RLHE). Residues 104–131 (LMAEFDEVLSTSVTADVDKLHKLASKLM) form a Pumilio 3; degenerate repeat. The stretch at 132–167 (LDSDLFFEFVITRRGSLMIQIILGKSEEVDQVILAG) is one Pumilio 4 repeat. The stretch at 168–205 (VKQRFIDVTTNFYGYRIMIQTIKVFKKRGDLKVYDQIL) is one Pumilio 5; degenerate repeat. A Pumilio 6; degenerate repeat occupies 206–243 (RLIGVHALYLTKDPDMGNKTFQHAINLHHQDCTTFIAC). Pumilio repeat units lie at residues 244–284 (GLQS…EIVK) and 285–319 (CDED…DFFG).

It is found in the cytoplasm. Functionally, sequence-specific RNA-binding protein that regulates translation and mRNA stability by binding the 3'-UTR of target mRNAs. This Arabidopsis thaliana (Mouse-ear cress) protein is Putative pumilio homolog 22 (APUM22).